The chain runs to 432 residues: Adenylosuccinate synthetase (432 aa).

Residues Gly13–Lys19 and Gly41–Thr43 contribute to the GTP site. Asp14 acts as the Proton acceptor in catalysis. The Mg(2+) site is built by Asp14 and Gly41. Residues Asp14–Lys17, Asn39–His42, Thr130, Arg144, Gln225, Thr240, and Arg304 each bind IMP. His42 serves as the catalytic Proton donor. Ala300–Arg306 provides a ligand contact to substrate. GTP-binding positions include Arg306, Lys332–Asp334, and Ser415–Gly417.

The protein belongs to the adenylosuccinate synthetase family. Homodimer. The cofactor is Mg(2+).

It localises to the cytoplasm. The catalysed reaction is IMP + L-aspartate + GTP = N(6)-(1,2-dicarboxyethyl)-AMP + GDP + phosphate + 2 H(+). It functions in the pathway purine metabolism; AMP biosynthesis via de novo pathway; AMP from IMP: step 1/2. Its function is as follows. Plays an important role in the de novo pathway of purine nucleotide biosynthesis. Catalyzes the first committed step in the biosynthesis of AMP from IMP. This chain is Adenylosuccinate synthetase, found in Tolumonas auensis (strain DSM 9187 / NBRC 110442 / TA 4).